The following is a 356-amino-acid chain: D-xylulose reductase (356 aa).

Residues cysteine 44, histidine 69, and glutamate 155 each coordinate Zn(2+). 179 to 184 (GAGPIG) is a binding site for NAD(+).

The protein belongs to the zinc-containing alcohol dehydrogenase family. The cofactor is Zn(2+).

The enzyme catalyses xylitol + NAD(+) = D-xylulose + NADH + H(+). The protein operates within carbohydrate degradation; L-arabinose degradation via L-arabinitol; D-xylulose 5-phosphate from L-arabinose (fungal route): step 4/5. The protein is D-xylulose reductase (XYL2) of Saccharomyces cerevisiae (strain ATCC 204508 / S288c) (Baker's yeast).